Reading from the N-terminus, the 60-residue chain is Large ribosomal subunit protein bL32 (60 aa).

Belongs to the bacterial ribosomal protein bL32 family.

The chain is Large ribosomal subunit protein bL32 from Ruminiclostridium cellulolyticum (strain ATCC 35319 / DSM 5812 / JCM 6584 / H10) (Clostridium cellulolyticum).